We begin with the raw amino-acid sequence, 92 residues long: Small ribosomal subunit protein uS19 (92 aa).

This sequence belongs to the universal ribosomal protein uS19 family.

Its function is as follows. Protein S19 forms a complex with S13 that binds strongly to the 16S ribosomal RNA. This is Small ribosomal subunit protein uS19 from Bartonella bacilliformis (strain ATCC 35685 / KC583 / Herrer 020/F12,63).